The chain runs to 441 residues: ATP-dependent RNA helicase SUB2 (441 aa).

Residues methionine 1–glutamate 17 show a composition bias toward acidic residues. The tract at residues methionine 1 to glutamine 47 is disordered. Polar residues predominate over residues proline 21 to asparagine 30. Residues alanine 33–glutamate 46 show a composition bias toward basic and acidic residues. Residues threonine 57 to glutamine 85 carry the Q motif motif. The Helicase ATP-binding domain occupies isoleucine 88–isoleucine 263. Residue alanine 101–threonine 108 participates in ATP binding. Positions aspartate 210–aspartate 213 match the DECD box motif. The Helicase C-terminal domain occupies glycine 275–serine 436.

It belongs to the DEAD box helicase family. DECD subfamily.

It localises to the nucleus. The catalysed reaction is ATP + H2O = ADP + phosphate + H(+). In terms of biological role, ATP-binding RNA helicase involved in transcription elongation and required for the export of mRNA out of the nucleus. SUB2 also plays a role in pre-mRNA splicing and spliceosome assembly. May be involved in rDNA and telomeric silencing, and maintenance of genome integrity. The sequence is that of ATP-dependent RNA helicase SUB2 (SUB2) from Yarrowia lipolytica (strain CLIB 122 / E 150) (Yeast).